Here is a 583-residue protein sequence, read N- to C-terminus: MSINTDESTWRTFKRLWTFIRLYKSGLAVAVVALIINAVSDTYMVSLLKPLLDEGFGSAESDFLRTLPLLVFGLMFIRGISSFVSTYCLSWVSGNVVMQVRRMVFNHYMQMPVSYFDKEKSGSLLSRITYDSEQVSAATSQALVSIVREGTSIIGLLVLMFYNSWQLSLVLILVAPVVAWAIGFVSKRFRKISKNMQTTMGIVTSSAEQMLKGHKVVLSYGGQEVEKSRFDVVSNQMRQQSMKLITAQAAANPIIQMIASIAIVVVLYLASVDTIKDQLTPGTFTVVFSAMFGLMRPLKALTNVTSQFQRGMAAAQTLFALVDLEPEKNTGTYSVERAKGEVNVKDISFTYEGAEKPALSHVSFDIPRGKTVALVGRSGSGKSTIANLFTRFYDVDSGEIQLDGVDVRDYELKNLRTQFALVSQNVHLFNDTIANNIAYAAGDKYSREDIERAAELAHAMEFISKMENGLDTVVGENGASLSGGQRQRVAIARALLRDAPVLILDEATSALDTESERAIQSALDELQKNKTVLVIAHRLSTIEKADQILVIDDGAVVERGSHSELIEKDGAYAQLHRIQFGEG.

Transmembrane regions (helical) follow at residues 27 to 47, 69 to 89, 142 to 162, 165 to 185, and 249 to 269; these read LAVA…MVSL, LLVF…TYCL, ALVS…LMFY, WQLS…IGFV, and AAAN…VLYL. Positions 28–310 constitute an ABC transmembrane type-1 domain; it reads AVAVVALIIN…LTNVTSQFQR (283 aa). Positions 342–578 constitute an ABC transporter domain; sequence VNVKDISFTY…DGAYAQLHRI (237 aa). 376–383 contacts ATP; sequence GRSGSGKS.

Belongs to the ABC transporter superfamily. Lipid exporter (TC 3.A.1.106) family. In terms of assembly, homodimer.

It is found in the cell inner membrane. The enzyme catalyses ATP + H2O + lipid A-core oligosaccharideSide 1 = ADP + phosphate + lipid A-core oligosaccharideSide 2.. In terms of biological role, involved in lipopolysaccharide (LPS) biosynthesis. Translocates lipid A-core from the inner to the outer leaflet of the inner membrane. Transmembrane domains (TMD) form a pore in the inner membrane and the ATP-binding domain (NBD) is responsible for energy generation. The polypeptide is ATP-dependent lipid A-core flippase (Vibrio vulnificus (strain YJ016)).